A 372-amino-acid chain; its full sequence is Dual-specificity RNA methyltransferase RlmN (372 aa).

Residue glutamate 92 is the Proton acceptor of the active site. A Radical SAM core domain is found at 98–337; the sequence is ETDRATLCVS…VILRKTRGDD (240 aa). Cysteine 105 and cysteine 342 form a disulfide bridge. 3 residues coordinate [4Fe-4S] cluster: cysteine 112, cysteine 116, and cysteine 119. S-adenosyl-L-methionine contacts are provided by residues 166–167, serine 198, 220–222, and asparagine 299; these read GE and SLH. Cysteine 342 functions as the S-methylcysteine intermediate in the catalytic mechanism.

Belongs to the radical SAM superfamily. RlmN family. The cofactor is [4Fe-4S] cluster.

The protein localises to the cytoplasm. The catalysed reaction is adenosine(2503) in 23S rRNA + 2 reduced [2Fe-2S]-[ferredoxin] + 2 S-adenosyl-L-methionine = 2-methyladenosine(2503) in 23S rRNA + 5'-deoxyadenosine + L-methionine + 2 oxidized [2Fe-2S]-[ferredoxin] + S-adenosyl-L-homocysteine. The enzyme catalyses adenosine(37) in tRNA + 2 reduced [2Fe-2S]-[ferredoxin] + 2 S-adenosyl-L-methionine = 2-methyladenosine(37) in tRNA + 5'-deoxyadenosine + L-methionine + 2 oxidized [2Fe-2S]-[ferredoxin] + S-adenosyl-L-homocysteine. In terms of biological role, specifically methylates position 2 of adenine 2503 in 23S rRNA and position 2 of adenine 37 in tRNAs. m2A2503 modification seems to play a crucial role in the proofreading step occurring at the peptidyl transferase center and thus would serve to optimize ribosomal fidelity. The chain is Dual-specificity RNA methyltransferase RlmN from Histophilus somni (strain 129Pt) (Haemophilus somnus).